Consider the following 361-residue polypeptide: G-protein coupled receptor 183 (361 aa).

Residues 1 to 31 lie on the Extracellular side of the membrane; that stretch reads MDIQMANNFTPPSATPQGNDCDLYAHHSTAR. Residues 32–57 form a helical membrane-spanning segment; that stretch reads IVMPLHYSLVFIIGLVGNLLALVVIV. Residues 58 to 77 lie on the Cytoplasmic side of the membrane; the sequence is QNRKKINSTTLYSTNLVISD. A helical transmembrane segment spans residues 78–95; it reads ILFTTALPTRIAYYAMGF. Position 87 (R87) interacts with 7alpha,25-dihydroxycholesterol. The Extracellular portion of the chain corresponds to 96 to 105; it reads DWRIGDALCR. C104 and C181 are joined by a disulfide. The helical transmembrane segment at 106-127 threads the bilayer; sequence ITALVFYINTYAGVNFMTCLSI. Residues Y112 and Y116 each contribute to the 7alpha,25-dihydroxycholesterol site. The segment at 126 to 134 is interaction with G proteins; the sequence is SIDRFIAVV. At 128–149 the chain is on the cytoplasmic side; the sequence is DRFIAVVHPLRYNKIKRIEHAK. The chain crosses the membrane as a helical span at residues 150 to 168; that stretch reads GVCIFVWILVFAQTLPLLI. At 169 to 192 the chain is on the extracellular side; that stretch reads NPMSKQEAERITCMEYPNFEETKS. The helical transmembrane segment at 193–215 threads the bilayer; it reads LPWILLGACFIGYVLPLIIILIC. Residues 216–241 are Cytoplasmic-facing; sequence YSQICCKLFRTAKQNPLTEKSGVNKK. Residues 242-265 traverse the membrane as a helical segment; that stretch reads ALNTIILIIVVFVLCFTPYHVAII. Y260 serves as a coordination point for 7alpha,25-dihydroxycholesterol. At 266 to 287 the chain is on the extracellular side; it reads QHMIKKLRFSNFLECSQRHSFQ. Residues 288 to 312 form a helical membrane-spanning segment; sequence ISLHFTVCLMNFNCCMDPFIYFFAC. At 313-361 the chain is on the cytoplasmic side; the sequence is KGYKRKVMRMLKRQVSVSISSAVKSAPEENSREMTETQMMIHSKSSNGK. Phosphoserine is present on S328. Positions 340-361 are disordered; the sequence is EENSREMTETQMMIHSKSSNGK. A compositionally biased stretch (polar residues) spans 348–361; sequence ETQMMIHSKSSNGK.

This sequence belongs to the G-protein coupled receptor 1 family. As to quaternary structure, homodimer and heterodimer. Heterodimerizes with CXCR5; leading to modulate the interaction between of CXCL13 and CXCR5. As to expression, expressed abundantly in lymphoid tissues such as spleen and lymph node, and in B- and T-lymphocytes. Also highly expressed in lung, heart and gastrointestinal tract, and weakly expressed in the urogenital system and brain. Expressed in astrocytes.

It localises to the cell membrane. Its function is as follows. G-protein coupled receptor expressed in lymphocytes that acts as a chemotactic receptor for B-cells, T-cells, splenic dendritic cells, monocytes/macrophages and astrocytes. Receptor for oxysterol 7-alpha,25-dihydroxycholesterol (7-alpha,25-OHC) and other related oxysterols. Mediates cell positioning and movement of a number of cells by binding the 7-alpha,25-OHC ligand that forms a chemotactic gradient. Binding of 7-alpha,25-OHC mediates the correct localization of B-cells during humoral immune responses. Guides B-cell movement along the B-cell zone-T-cell zone boundary and later to interfollicular and outer follicular regions. Its specific expression during B-cell maturation helps position B-cells appropriately for mounting T-dependent antibody responses. Collaborates with CXCR5 to mediate B-cell migration; probably by forming a heterodimer with CXCR5 that affects the interaction between of CXCL13 and CXCR5. Also acts as a chemotactic receptor for some T-cells upon binding to 7-alpha,25-OHC ligand. Promotes follicular helper T (Tfh) cells differentiation by positioning activated T-cells at the follicle-T-zone interface, promoting contact of newly activated CD4 T-cells with activated dendritic cells and exposing them to Tfh-cell-promoting inducible costimulator (ICOS) ligand. Expression in splenic dendritic cells is required for their homeostasis, localization and ability to induce B- and T-cell responses: GPR183 acts as a chemotactic receptor in dendritic cells that mediates the accumulation of CD4(+) dendritic cells in bridging channels. Regulates migration of astrocytes and is involved in communication between astrocytes and macrophages. Promotes osteoclast precursor migration to bone surfaces. Signals constitutively through G(i)-alpha, but not G(s)-alpha or G(q)-alpha. Signals constitutively also via MAPK1/3 (ERK1/2). This Homo sapiens (Human) protein is G-protein coupled receptor 183.